The chain runs to 550 residues: MSHGPSPRLAESPQLSKGSLLTILGSPSPERMGPADSLPPTPPSGTPSPGPPPALPLPPAPALLADGDWESREELRLRELEEARARAAQMEKTMRRWSDCTANWREKWSKVRAERNRAREEVRQLRQRLDALTKELAGARRERQEAQGECEARGRELARLRGARGVADQTRDGPEPEAEREPVRDVGSERPPGSQELELVESLLKSMPEESEDCWEARSLGAGGPRGSSGRQERSRLPWEDTAATEEEASKLTALRLRLDESQKVLLKEREDKLALSRNIEKLEGELSQWKIKYEELSKTKQEMLKQLSILKEAHQDELGRMSEDLEDELGARSSMDRKMAELRGEMERLQAENAAEWGRRERLETEKLGLERENKKLRAQVGDLEEALARRRRQTASALDCDLRASQAALFEKNKELADLKHVHGKLKKQFQEKVAELAHANRRVEQHEAEVKKLRLRVEELKKELAQAEDELDEAHNQARKLQRSLDEQTEQSENLQVQLEHLQSRLRRQQQNAPLFGKIRSARFGTEEAEDGTSDLDEDEDLQIQVA.

Disordered stretches follow at residues 1 to 69 (MSHG…DGDW) and 138 to 247 (GARR…ATEE). 3 positions are modified to phosphoserine: S12, S26, and S28. Over residues 37 to 61 (SLPPTPPSGTPSPGPPPALPLPPAP) the composition is skewed to pro residues. Residues 72-161 (REELRLRELE…ARGRELARLR (90 aa)) are a coiled coil. Composition is skewed to basic and acidic residues over residues 138-159 (GARR…ELAR) and 169-188 (QTRD…DVGS). Coiled coils occupy residues 263-396 (QKVL…RRQT) and 427-518 (KLKK…NAPL). Disordered stretches follow at residues 472–497 (DELD…QSEN) and 509–550 (LRRQ…IQVA). Over residues 530–550 (EEAEDGTSDLDEDEDLQIQVA) the composition is skewed to acidic residues. S537 bears the Phosphoserine mark.

In Homo sapiens (Human), this protein is Coiled-coil domain-containing protein 102A (CCDC102A).